A 349-amino-acid polypeptide reads, in one-letter code: Flagellar P-ring protein (349 aa).

Positions Met-1–Ala-20 are cleaved as a signal peptide.

This sequence belongs to the FlgI family. The basal body constitutes a major portion of the flagellar organelle and consists of four rings (L,P,S, and M) mounted on a central rod.

It localises to the periplasm. It is found in the bacterial flagellum basal body. Assembles around the rod to form the L-ring and probably protects the motor/basal body from shearing forces during rotation. This Wolinella succinogenes (strain ATCC 29543 / DSM 1740 / CCUG 13145 / JCM 31913 / LMG 7466 / NCTC 11488 / FDC 602W) (Vibrio succinogenes) protein is Flagellar P-ring protein.